The sequence spans 586 residues: MHTPPALPRRFQGGGRVRTPGSHRQGKDNLERELSGGCAPDFLPQAQDSNHFIMESLFCESSGDSSLEKEFLGAPVGPSVSTPNSQHSSPSRSLSANSIKVEMYSDEESSRLLGPDERLLDKDDSVIVEDSLSEPLGYCDGSGPEPHSPGGIRLPNGKLKCDVCGMVCIGPNVLMVHKRSHTGERPFHCNQCGASFTQKGNLLRHIKLHSGEKPFKCPFCNYACRRRDALTGHLRTHSVSSPTVGKPYKCNYCGRSYKQQSTLEEHKERCHNYLQSLSTDAQALTGQPGDEIRDLEMVPDSMLHPSTERPTFIDRLANSLTKRKRSTPQKFVGEKQMRFSLSDLPYDVNASGGYEKDVELVAHHGLEPGFGGSLAFVGTEHLRPLRLPPTNCISELTPVISSVYTQMQPIPSRLELPGSREAGEGPEDLGDGGPLLYRARGSLTDPGASPSNGCQDSTDTESNHEDRIGGVVSLPQGPPPQPPPTIVVGRHSPAYAKEDPKPQEGLLRGTPGPSKEVLRVVGESGEPVKAFKCEHCRILFLDHVMFTIHMGCHGFRDPFECNICGYHSQDRYEFSSHIVRGEHKVG.

Disordered regions lie at residues 1-42 (MHTP…APDF) and 68-98 (EKEFLGAPVGPSVSTPNSQHSSPSRSLSANS). The span at 25–34 (QGKDNLEREL) shows a compositional bias: basic and acidic residues. Residues 79-98 (SVSTPNSQHSSPSRSLSANS) are compositionally biased toward polar residues. Residue Lys-100 forms a Glycyl lysine isopeptide (Lys-Gly) (interchain with G-Cter in SUMO2) linkage. Phosphoserine is present on Ser-105. 4 C2H2-type zinc fingers span residues 159–181 (LKCDVCGMVCIGPNVLMVHKRSH), 187–209 (FHCNQCGASFTQKGNLLRHIKLH), 215–237 (FKCPFCNYACRRRDALTGHLRTH), and 248–271 (YKCNYCGRSYKQQSTLEEHKERCH). Residues 281–586 (AQALTGQPGD…HIVRGEHKVG (306 aa)) are interaction with FOXP3. At Lys-335 the chain carries N6-acetyllysine. The segment at 413–490 (RLELPGSREA…QPPPTIVVGR (78 aa)) is disordered. The short motif at 423 to 433 (GEGPEDLGDGG) is the CTBP-binding motif PEDLG element. Positions 476-485 (QGPPPQPPPT) are enriched in pro residues. Lys-501 participates in a covalent cross-link: Glycyl lysine isopeptide (Lys-Gly) (interchain with G-Cter in SUMO2). C2H2-type zinc fingers lie at residues 531-553 (FKCEHCRILFLDHVMFTIHMGCH) and 559-583 (FECNICGYHSQDRYEFSSHIVRGEH).

This sequence belongs to the Ikaros C2H2-type zinc-finger protein family. Self-associates. Interacts with other family members; IKZF1, IKZF2, IKZF3 and IKZF5. Interacts with CTBP2, SPI1 and MITF. Interacts with FOXP3 and CTBP1. Expressed mainly in the brain. Up-regulated in long term cultured astrocytes. Down-regulated during osteoclast differentiation.

The protein resides in the nucleus. In terms of biological role, DNA-binding protein that binds to the 5'GGGAATRCC-3' Ikaros-binding sequence. Interacts with SPI1 and MITF to repress transcription of the CTSK and ACP5 promoters via recruitment of corepressors SIN3A and CTBP2. May be involved in the development of central and peripheral nervous systems. Essential for the inhibitory function of regulatory T-cells (Treg). Mediates FOXP3-mediated gene silencing in regulatory T-cells (Treg) via recruitment of corepressor CTBP1. The sequence is that of Zinc finger protein Eos (Ikzf4) from Mus musculus (Mouse).